A 228-amino-acid polypeptide reads, in one-letter code: uncharacterized protein (228 aa).

Residues 1 to 19 (MYRYTWLLWWITILLRIQQ) form the signal peptide. N-linked (GlcNAc...) asparagine; by host glycans are attached at residues Asn41, Asn93, Asn100, Asn128, and Asn164. A helical transmembrane segment spans residues 189–209 (MWIIPLVIVTTIIVLICFKFP).

It belongs to the HHV-5 UL9 family.

The protein resides in the host membrane. This is an uncharacterized protein from Homo sapiens (Human).